Reading from the N-terminus, the 692-residue chain is Elongation factor G (692 aa).

The 275-residue stretch at 9–283 (DKLRNIGIMA…AVIDYLPSPL (275 aa)) folds into the tr-type G domain. Residues 18–25 (AHIDAGKT), 82–86 (DTPGH), and 136–139 (NKMD) each bind GTP.

The protein belongs to the TRAFAC class translation factor GTPase superfamily. Classic translation factor GTPase family. EF-G/EF-2 subfamily.

The protein localises to the cytoplasm. In terms of biological role, catalyzes the GTP-dependent ribosomal translocation step during translation elongation. During this step, the ribosome changes from the pre-translocational (PRE) to the post-translocational (POST) state as the newly formed A-site-bound peptidyl-tRNA and P-site-bound deacylated tRNA move to the P and E sites, respectively. Catalyzes the coordinated movement of the two tRNA molecules, the mRNA and conformational changes in the ribosome. This Thermotoga maritima (strain ATCC 43589 / DSM 3109 / JCM 10099 / NBRC 100826 / MSB8) protein is Elongation factor G (fusA).